The chain runs to 114 residues: Hydrogenase maturation factor HypA (114 aa).

Residue histidine 2 coordinates Ni(2+). Cysteine 73, cysteine 76, cysteine 89, and cysteine 92 together coordinate Zn(2+).

It belongs to the HypA/HybF family.

In terms of biological role, involved in the maturation of [NiFe] hydrogenases. Required for nickel insertion into the metal center of the hydrogenase. The protein is Hydrogenase maturation factor HypA of Azoarcus sp. (strain BH72).